A 388-amino-acid polypeptide reads, in one-letter code: Paired box protein Pax-5 (388 aa).

Residues 15–141 (RHGGVNQLGG…SSINRIIRTK (127 aa)) constitute a DNA-binding region (paired). Residues 18–74 (GVNQLGGVFVNGRPLPDVVRQRIVELAHQGVRPCDISRQLRVSHGCVSKILGRYYET) form a PAI subdomain region. The RED subdomain stretch occupies residues 93 to 141 (KVVDKIADYKRQNPTMFAWEIRDRLLAERVCDNDTVPSVSSINRIIRTK). Polar residues predominate over residues 143 to 158 (QQPTNQQIPPSNHSIA). Disordered regions lie at residues 143–162 (QQPT…STGS) and 191–217 (AETN…PGRD).

As to expression, first detected in mid-neurula embryos in the folding neural tube. With the completion of neurulation, expression becomes localized to the midbrain/hindbrain boundary (MHB) till at least stage 40. Expression is absent from regions adjacent to the MHB. In tailbuds, weakly and transiently expressed in the developing otic vesicle from stage 21 to stage 27.

It localises to the nucleus. Its function is as follows. Probable transcription factor. The polypeptide is Paired box protein Pax-5 (Xenopus laevis (African clawed frog)).